The following is a 63-amino-acid chain: MANLCEICGKGNNSGASVSHSNKKTKRKWKGNIQKLKAMVDGRPKKVKVCTQCIKAGKIERAF.

Positions 11–20 are enriched in polar residues; it reads GNNSGASVSH. Positions 11–30 are disordered; it reads GNNSGASVSHSNKKTKRKWK. Positions 21 to 30 are enriched in basic residues; the sequence is SNKKTKRKWK.

Belongs to the bacterial ribosomal protein bL28 family.

The polypeptide is Large ribosomal subunit protein bL28 (Natranaerobius thermophilus (strain ATCC BAA-1301 / DSM 18059 / JW/NM-WN-LF)).